The chain runs to 490 residues: GTPase Der (490 aa).

EngA-type G domains follow at residues 3-166 and 196-369; these read PVIA…PRDE and IKIA…KSAV. GTP contacts are provided by residues 9–16, 56–60, 118–121, 202–209, 249–253, and 314–317; these read GRPNVGKS, DTGGI, NKID, DTAGV, and NKWD. In terms of domain architecture, KH-like spans 370-454; the sequence is TRWPTSRLTQ…PIRIEFKGGE (85 aa). The interval 452-490 is disordered; sequence GGENPYEGNKNTLTDRQVNKKRRMMSHHKKADKKRRDKR. Residues 470–490 are compositionally biased toward basic residues; the sequence is NKKRRMMSHHKKADKKRRDKR.

The protein belongs to the TRAFAC class TrmE-Era-EngA-EngB-Septin-like GTPase superfamily. EngA (Der) GTPase family. Associates with the 50S ribosomal subunit.

In terms of biological role, GTPase that plays an essential role in the late steps of ribosome biogenesis. The chain is GTPase Der from Pseudomonas syringae pv. syringae (strain B728a).